The sequence spans 289 residues: Geranylgeranyl diphosphate synthase (289 aa).

Isopentenyl diphosphate is bound by residues arginine 43 and histidine 73. The Mg(2+) site is built by aspartate 80 and aspartate 86. Arginine 91 serves as a coordination point for (2E,6E)-farnesyl diphosphate. Arginine 92 serves as a coordination point for isopentenyl diphosphate. Residues lysine 170, threonine 171, and glutamine 205 each coordinate (2E,6E)-farnesyl diphosphate.

Belongs to the FPP/GGPP synthase family. Mg(2+) serves as cofactor.

The enzyme catalyses isopentenyl diphosphate + (2E,6E)-farnesyl diphosphate = (2E,6E,10E)-geranylgeranyl diphosphate + diphosphate. The protein operates within isoprenoid biosynthesis; geranylgeranyl diphosphate biosynthesis; geranylgeranyl diphosphate from farnesyl diphosphate and isopentenyl diphosphate: step 1/1. In terms of biological role, catalyzes the condensation of farnesyl diphosphate (FPP) and isopentenyl diphosphate (IPP) to yield geranylgeranyl diphosphate (GGPP) needed for biosynthesis of carotenoids and diterpenes. The chain is Geranylgeranyl diphosphate synthase (crtE) from Rhodobacter capsulatus (strain ATCC BAA-309 / NBRC 16581 / SB1003).